Reading from the N-terminus, the 54-residue chain is Ovomucoid (54 aa).

One can recognise a Kazal-like domain in the interval 4–54; it reads VDCSDYPKPACRMEYMPLCGSDNKTYGNKCNFCNAVVDSNGTLTLSHFGKC. 3 disulfide bridges follow: Cys6-Cys36, Cys14-Cys33, and Cys22-Cys54. The N-linked (GlcNAc...) asparagine glycan is linked to Asn43.

It is found in the secreted. The protein is Ovomucoid of Cereopsis novaehollandiae (Cape Barren goose).